We begin with the raw amino-acid sequence, 735 residues long: uncharacterized protein (735 aa).

Residues D25–L175 form the GAF domain. In terms of domain architecture, PAS spans S185 to T255. Positions R263–R313 constitute a PAC domain. A GGDEF domain is found at G342–H464. Residues R472–A732 form the EAL domain.

This is an uncharacterized protein from Azorhizobium caulinodans (strain ATCC 43989 / DSM 5975 / JCM 20966 / LMG 6465 / NBRC 14845 / NCIMB 13405 / ORS 571).